The primary structure comprises 41 residues: Omega-theraphotoxin-Hg1a (41 aa).

Intrachain disulfides connect Cys7/Cys21, Cys14/Cys26, and Cys20/Cys33.

It belongs to the neurotoxin 10 (Hwtx-1) family. 56 (SNX-482) subfamily. In terms of tissue distribution, expressed by the venom gland.

It is found in the secreted. Toxin that blocks vertebrate P/Q-type (Cav2.1/CACNA1A) and R-type (Cav2.3/CACNA1E) voltage-gated calcium channels. Also inhibits sodium channels (Nav) in bovine chromaffin cells by delaying sodium channel inactivation. The sequence is that of Omega-theraphotoxin-Hg1a from Hysterocrates gigas (Cameroon red baboon tarantula).